The sequence spans 788 residues: Leucine-rich repeat and fibronectin type-III domain-containing protein 2 (788 aa).

A signal peptide spans 1–20; sequence METLLGGLLAFGMAFAVVDA. The region spanning 21–52 is the LRRNT domain; that stretch reads CPKYCVCQNLSESLGTLCPSKGLLFVPPDIDR. The Extracellular portion of the chain corresponds to 21 to 534; sequence CPKYCVCQNL…MHSQILGGTM (514 aa). Asn29 carries N-linked (GlcNAc...) asparagine glycosylation. LRR repeat units lie at residues 53-74, 77-98, 101-122, 125-146, 150-171, 174-195, and 198-219; these read RTVE…DFAN, GLVD…SFLD, SLRS…TLRG, NLQH…AFED, TLED…SVRR, NLHQ…TFAD, and KLAR…PIFA. In terms of domain architecture, LRRCT spans 242–288; that stretch reads NPLHCNCELLWLRRLERDDDLETCGSPGSLKGRYFWHIREEEFVCEP. Residues 289–375 enclose the Ig-like domain; it reads PLITQHTHKL…GEATATVEVS (87 aa). A disulfide bridge links Cys310 with Cys359. N-linked (GlcNAc...) asparagine glycans are attached at residues Asn332, Asn341, and Asn384. The segment at 383–423 is disordered; that stretch reads SNSTSRMAPPKSRLSDITGSSKTSRGGGGSGAGEPPKSTPE. Residues 422 to 518 form the Fibronectin type-III domain; that stretch reads PERAVLVSDV…GCAQFFTKAD (97 aa). The chain crosses the membrane as a helical span at residues 535-555; it reads ILVIGGIIVATLLVFIVILMV. Residues 556 to 788 are Cytoplasmic-facing; that stretch reads RYKVCNHDTP…SSEWVMESTV (233 aa). Over residues 620–631 the composition is skewed to low complexity; it reads CDSSSSSSLGSG. 2 disordered regions span residues 620–655 and 668–711; these read CDSS…PSLD and SQRK…RSLL. The span at 642-651 shows a compositional bias: pro residues; that stretch reads RLPPPAPRPK. Positions 785-788 match the PDZ-binding motif; it reads ESTV.

This sequence belongs to the LRFN family. As to quaternary structure, forms heteromeric complexes with LRFN1, LRFN3, LRFN4 and LRFN5. Can form homomeric complexes, but not across cell junctions. Interacts with DLG4. Directly interacts with DLG1, DLG2 and DLG3. Directly interacts with 2 NMDA receptor subunits GRIN1 and GRIN2A. Post-translationally, glycosylated. As to expression, predominantly expressed in the brain, with a weak, but broad expression in the cerebral cortex and diencephalic nuclei. Strongly expressed in both the pyramidal layer and the dentate gyrus of the hippocampus. Also detected in other parts of the central nervous system, including the olfactory bulb, pons, cerebellum, and medulla oblongata, as well as in the peripheral nervous system, such as the ganglia of cranial nerves and the dorsal root ganglion during gestation.

It localises to the membrane. The protein localises to the synapse. The protein resides in the postsynaptic cell membrane. In terms of biological role, promotes neurite outgrowth in hippocampal neurons. Enhances the cell surface expression of 2 NMDA receptor subunits GRIN1 and GRIN2A. May play a role in redistributing DLG4 to the cell periphery. This is Leucine-rich repeat and fibronectin type-III domain-containing protein 2 (Lrfn2) from Mus musculus (Mouse).